The following is a 455-amino-acid chain: Retinoic acid receptor beta (455 aa).

The segment at 1–87 (MTTSGHACPV…PLPPPRVYKP (87 aa)) is modulating. Residues 47 to 78 (HPPPSGCSTPSPATIETQSTSSEELVPSPPSP) are disordered. Residues 53-66 (CSTPSPATIETQST) are compositionally biased toward polar residues. At serine 77 the chain carries Phosphoserine. 2 NR C4-type zinc fingers span residues 88 to 108 (CFVCQDKSSGYHYGVSACEGC) and 124 to 148 (CHRDKNCVINKVTRNRCQYCRLQKC). Positions 88 to 153 (CFVCQDKSSG…RLQKCFEVGM (66 aa)) form a DNA-binding region, nuclear receptor. Positions 154 to 182 (SKESVRNDRNKKKKETSKQECTESYEMTA) are hinge. An NR LBD domain is found at 183 to 417 (ELDDLTEKIR…PLIQEMLENS (235 aa)). The disordered stretch occupies residues 415 to 455 (ENSEGHEPLTPSSSGNTAEHSPSISPSSVENSGVSQSPLVQ). Polar residues predominate over residues 424–434 (TPSSSGNTAEH). A compositionally biased stretch (low complexity) spans 435-455 (SPSISPSSVENSGVSQSPLVQ).

Belongs to the nuclear hormone receptor family. NR1 subfamily. As to quaternary structure, homodimer. Heterodimer; with a RXR molecule. Binds DNA preferentially as a RAR/RXR heterodimer. Heterodimerizes (via NR LBD) with RXRA. Interacts weakly with NCOR2. Expressed in aortic endothelial cells (at protein level).

It is found in the nucleus. The protein localises to the cytoplasm. Functionally, receptor for retinoic acid. Retinoic acid receptors bind as heterodimers to their target response elements in response to their ligands, all-trans or 9-cis retinoic acid, and regulate gene expression in various biological processes. The RXR/RAR heterodimers bind to the retinoic acid response elements (RARE) composed of tandem 5'-AGGTCA-3' sites known as DR1-DR5. In the absence or presence of hormone ligand, acts mainly as an activator of gene expression due to weak binding to corepressors. The RXRA/RARB heterodimer can act as a repressor on the DR1 element and as an activator on the DR5 element. In concert with RARG, required for skeletal growth, matrix homeostasis and growth plate function. The protein is Retinoic acid receptor beta (RARB) of Homo sapiens (Human).